We begin with the raw amino-acid sequence, 193 residues long: Potassium-transporting ATPase KdpC subunit (193 aa).

Residues 10–30 form a helical membrane-spanning segment; that stretch reads AAIIIFSVLTGVIYPALVTVI.

It belongs to the KdpC family. The system is composed of three essential subunits: KdpA, KdpB and KdpC.

The protein localises to the cell membrane. Part of the high-affinity ATP-driven potassium transport (or Kdp) system, which catalyzes the hydrolysis of ATP coupled with the electrogenic transport of potassium into the cytoplasm. This subunit acts as a catalytic chaperone that increases the ATP-binding affinity of the ATP-hydrolyzing subunit KdpB by the formation of a transient KdpB/KdpC/ATP ternary complex. This chain is Potassium-transporting ATPase KdpC subunit, found in Herpetosiphon aurantiacus (strain ATCC 23779 / DSM 785 / 114-95).